Consider the following 557-residue polypeptide: Selenoprotein N (557 aa).

The tract at residues 1-24 is disordered; sequence MGQARPAARRPHSPDPGAQPAPPR. Residues 1–42 form the signal peptide; the sequence is MGQARPAARRPHSPDPGAQPAPPRRRARALALLGALLAAAAA. In terms of domain architecture, EF-hand spans 67 to 102; that stretch reads VLGTDGLFLFSSLDTDQDMYISPEEFKPIAEKLTGS. Asparagine 156 is a glycosylation site (N-linked (GlcNAc...) asparagine). A non-standard amino acid (selenocysteine) is located at residue selenocysteine 428. 2 N-linked (GlcNAc...) asparagine glycosylation sites follow: asparagine 449 and asparagine 497.

Interacts with RYR1, RYR2 and RYR3. In terms of processing, N-glycosylated.

It is found in the endoplasmic reticulum membrane. Functionally, plays an important role in cell protection against oxidative stress and in the regulation of redox-related calcium homeostasis. Regulates the calcium level of the ER by protecting the calcium pump ATP2A2 against the oxidoreductase ERO1A-mediated oxidative damage. Within the ER, ERO1A activity increases the concentration of H(2)O(2), which attacks the luminal thiols in ATP2A2 and thus leads to cysteinyl sulfenic acid formation (-SOH) and SEPN1 reduces the SOH back to free thiol (-SH), thus restoring ATP2A2 activity. Acts as a modulator of ryanodine receptor (RyR) activity: protects RyR from oxidation due to increased oxidative stress, or directly controls the RyR redox state, regulating the RyR-mediated calcium mobilization required for normal muscle development and differentiation. Essential for muscle regeneration and satellite cell maintenance in skeletal muscle. In Mus musculus (Mouse), this protein is Selenoprotein N.